We begin with the raw amino-acid sequence, 420 residues long: Tryptophan synthase beta chain (420 aa).

N6-(pyridoxal phosphate)lysine is present on Lys99.

It belongs to the TrpB family. As to quaternary structure, tetramer of two alpha and two beta chains. Requires pyridoxal 5'-phosphate as cofactor.

The enzyme catalyses (1S,2R)-1-C-(indol-3-yl)glycerol 3-phosphate + L-serine = D-glyceraldehyde 3-phosphate + L-tryptophan + H2O. It functions in the pathway amino-acid biosynthesis; L-tryptophan biosynthesis; L-tryptophan from chorismate: step 5/5. In terms of biological role, the beta subunit is responsible for the synthesis of L-tryptophan from indole and L-serine. The chain is Tryptophan synthase beta chain from Helicobacter hepaticus (strain ATCC 51449 / 3B1).